The chain runs to 329 residues: Calponin-3 (329 aa).

Lys-23 bears the N6-acetyllysine mark. Residues 26–130 (HQAEEDLRNW…TLVALAGLAK (105 aa)) form the Calponin-homology (CH) domain. Lys-158 bears the N6-methyllysine mark. Calponin-like repeat units lie at residues 164 to 189 (IGLQ…RHLY), 204 to 229 (ISLQ…RDIY), and 243 to 268 (ISLQ…RQVY). The tract at residues 279–329 (PVIHNGSQGTGTNGSEISDSDYQAEYPDEYHGEYQDDYPRDYQYSDQGIDY) is disordered. A compositionally biased stretch (basic and acidic residues) spans 306–318 (DEYHGEYQDDYPR). Ser-323 is modified (phosphoserine).

This sequence belongs to the calponin family. Expressed in both non-smooth muscle tissues as well as smooth muscle tissues.

Thin filament-associated protein that is implicated in the regulation and modulation of smooth muscle contraction. It is capable of binding to actin, calmodulin and tropomyosin. The interaction of calponin with actin inhibits the actomyosin Mg-ATPase activity. This chain is Calponin-3 (CNN3), found in Homo sapiens (Human).